The primary structure comprises 70 residues: Brevinin-1MT2 (70 aa).

The N-terminal stretch at 1 to 22 (MFTLKKSMLLLFFLGTINLSLC) is a signal peptide. Residues 23 to 44 (EQERNADEEERRDDDEMDVEVE) constitute a propeptide that is removed on maturation. C64 and C70 are disulfide-bonded.

Belongs to the frog skin active peptide (FSAP) family. Brevinin subfamily. In terms of tissue distribution, expressed by the skin glands.

It is found in the secreted. In terms of biological role, antimicrobial peptide with activity against a variety of Gram-negative and Gram-positive bacteria and against fungi. Shows strong hemolytic activity against human erythrocytes. The polypeptide is Brevinin-1MT2 (Amolops mantzorum (Sichuan torrent frog)).